Here is a 505-residue protein sequence, read N- to C-terminus: Apolipoprotein N-acyltransferase (505 aa).

7 consecutive transmembrane segments (helical) span residues 6 to 26, 29 to 49, 53 to 73, 80 to 100, 119 to 139, 152 to 172, and 189 to 209; these read PSILVACILSFCLGAIGCLAF, FDIWLIAYLSAAGLIWAATLV, TAMLATFAWSIGYFGVGVQWV, FGGVPVIVSYLAVLLLASYLG, FVLASLFTFTEYLRGVVFTGF, PFAQLAPIFGVEGLTFLVILL, and TFTKIAVIIGFSLASNLLQFV. One can recognise a CN hydrolase domain in the interval 223 to 469; that stretch reads IQANIEQQLK…TNTLTAEIAT (247 aa). The Proton acceptor role is filled by Glu263. The active site involves Lys328. Cys379 (nucleophile) is an active-site residue. A helical transmembrane segment spans residues 475–495; the sequence is LFGQFGHWLIYSLSFICVAFG.

It belongs to the CN hydrolase family. Apolipoprotein N-acyltransferase subfamily.

Its subcellular location is the cell inner membrane. The enzyme catalyses N-terminal S-1,2-diacyl-sn-glyceryl-L-cysteinyl-[lipoprotein] + a glycerophospholipid = N-acyl-S-1,2-diacyl-sn-glyceryl-L-cysteinyl-[lipoprotein] + a 2-acyl-sn-glycero-3-phospholipid + H(+). It functions in the pathway protein modification; lipoprotein biosynthesis (N-acyl transfer). Functionally, catalyzes the phospholipid dependent N-acylation of the N-terminal cysteine of apolipoprotein, the last step in lipoprotein maturation. The sequence is that of Apolipoprotein N-acyltransferase from Haemophilus ducreyi (strain 35000HP / ATCC 700724).